The chain runs to 67 residues: DNA-directed RNA polymerase subunit omega (67 aa).

This sequence belongs to the RNA polymerase subunit omega family. As to quaternary structure, the RNAP catalytic core consists of 2 alpha, 1 beta, 1 beta' and 1 omega subunit. When a sigma factor is associated with the core the holoenzyme is formed, which can initiate transcription.

The enzyme catalyses RNA(n) + a ribonucleoside 5'-triphosphate = RNA(n+1) + diphosphate. Its function is as follows. Promotes RNA polymerase assembly. Latches the N- and C-terminal regions of the beta' subunit thereby facilitating its interaction with the beta and alpha subunits. In Bordetella pertussis (strain Tohama I / ATCC BAA-589 / NCTC 13251), this protein is DNA-directed RNA polymerase subunit omega.